A 1112-amino-acid chain; its full sequence is Glutamate receptor-interacting protein 1 (1112 aa).

A Phosphoserine modification is found at Ser-43. PDZ domains lie at 53-136 (VVEL…EYEL), 150-238 (TVEV…EYDV), 252-336 (LVEV…LPHH), 471-560 (EVVL…EFDV), 572-657 (HVKL…RKDE), and 672-754 (TVEL…KKQT). Disordered stretches follow at residues 752–796 (KQTD…VYPS), 841–886 (KRAS…AEQE), and 922–963 (NHEA…DVGR). Over residues 869–880 (STASGFAGASDS) the composition is skewed to low complexity. Over residues 928-958 (ARSQLGRQASFQERSNSRPHYSQTTRSNTLP) the composition is skewed to polar residues. Residues 988–1070 (KVTLYKDSGM…KLDLVISRNP (83 aa)) form the PDZ 7 domain. The tract at residues 1077–1112 (IEQPALPSDWSEQNSAFFQQPSHGGNLETREPTNTL) is disordered. Polar residues predominate over residues 1086–1099 (WSEQNSAFFQQPSH).

Interacts with EFNB1, EPHA7, EPHB2, EFNB3, KIF5A, KIF5C, KIF5B and the C-terminal tail of PRLHR. Forms a ternary complex with GRIA2 and CSPG4. Can form homomultimers or heteromultimers with GRIP2. Interacts with GRIA2, GRIA3, GRIPAP1/GRASP1, PPFIA1, PPFIA4, FRAS1, PLCD4, PTPRF and liprins-alpha. Interacts with ATAD1 in an ATP-dependent manner. ATAD1-catalyzed ATP hydrolysis disrupts binding to ATAD1 and to GRIA2 and leads to AMPAR complex disassembly. Interacts with SLC30A9. Interacts with BUD23. Forms a complex with NSG1, GRIA2 and STX12; controls the intracellular fate of AMPAR and the endosomal sorting of the GRIA2 subunit toward recycling and membrane targeting. Interacts with NSG1. Expressed in brain, testis and retina. In brain highly expressed in the olfactory bulb, cortex and hippocampus and lower level in thalamus, cerebellum and spinal cord. In brain it is found in the perikaryon, dendrites, dendritic shafts, dendritic spines and, excitatory and inhibitory synapses of neurons. In retina, it is most abundant in the plexiform layers than in perikarya.

It localises to the cytoplasmic vesicle. The protein localises to the perikaryon. The protein resides in the cell projection. It is found in the dendrite. Its subcellular location is the cytoplasm. It localises to the endomembrane system. The protein localises to the postsynaptic cell membrane. The protein resides in the postsynaptic density. It is found in the endoplasmic reticulum membrane. In terms of biological role, may play a role as a localized scaffold for the assembly of a multiprotein signaling complex and as mediator of the trafficking of its binding partners at specific subcellular location in neurons. Through complex formation with NSG1, GRIA2 and STX12 controls the intracellular fate of AMPAR and the endosomal sorting of the GRIA2 subunit toward recycling and membrane targeting. In Rattus norvegicus (Rat), this protein is Glutamate receptor-interacting protein 1 (Grip1).